A 177-amino-acid chain; its full sequence is Parathyroid hormone-related protein (177 aa).

A signal peptide spans 1-24 (MLRRLVQQWSVLVFLLSYSVPSRG). Positions 25-34 (RSVEGLGRRL) are excised as a propeptide. The tract at residues 57–68 (RFFLHHLIAEIH) is important for receptor binding. The interval 74-177 (ATSEVSPNSK…TSLEPSSRTH (104 aa)) is disordered. Residues 76–90 (SEVSPNSKPAPNTKN) show a composition bias toward polar residues. A Nuclear localization signal motif is present at residues 108 to 129 (TNKVETYKEQPLKTPGKKKKGK). Residues 109–118 (NKVETYKEQP) show a composition bias toward basic and acidic residues. The span at 122-132 (PGKKKKGKPGK) shows a compositional bias: basic residues. Positions 161-177 (PHTSPTSTSLEPSSRTH) are enriched in low complexity.

The protein belongs to the parathyroid hormone family. PTHrP interacts with PTH1R (via N-terminal extracellular domain). In terms of processing, there are several secretory forms, including osteostatin, arising from endoproteolytic cleavage of the initial translation product. Each of these secretory forms is believed to have one or more of its own receptors that mediates the normal paracrine, autocrine and endocrine actions.

Its subcellular location is the secreted. It localises to the cytoplasm. It is found in the nucleus. Neuroendocrine peptide which is a critical regulator of cellular and organ growth, development, migration, differentiation and survival and of epithelial calcium ion transport. Acts by binding to its receptor, PTH1R, activating G protein-coupled receptor signaling. Regulates endochondral bone development and epithelial-mesenchymal interactions during the formation of the mammary glands and teeth. Required for skeletal homeostasis. Promotes mammary mesenchyme differentiation and bud outgrowth by modulating mesenchymal cell responsiveness to BMPs. Up-regulates BMPR1A expression in the mammary mesenchyme and this increases the sensitivity of these cells to BMPs and allows them to respond to BMP4 in a paracrine and/or autocrine fashion. BMP4 signaling in the mesenchyme, in turn, triggers epithelial outgrowth and augments MSX2 expression, which causes the mammary mesenchyme to inhibit hair follicle formation within the nipple sheath. Its function is as follows. Potent inhibitor of osteoclastic bone resorption. The polypeptide is Parathyroid hormone-related protein (Pthlh) (Rattus norvegicus (Rat)).